Consider the following 81-residue polypeptide: Photosystem I iron-sulfur center (81 aa).

2 4Fe-4S ferredoxin-type domains span residues 2–31 and 39–68; these read SHSV…MIPW and IAPA…VRVY. The [4Fe-4S] cluster site is built by C11, C14, C17, C21, C48, C51, C54, and C58.

As to quaternary structure, the eukaryotic PSI reaction center is composed of at least 11 subunits. [4Fe-4S] cluster is required as a cofactor.

It is found in the plastid. It localises to the chloroplast thylakoid membrane. The enzyme catalyses reduced [plastocyanin] + hnu + oxidized [2Fe-2S]-[ferredoxin] = oxidized [plastocyanin] + reduced [2Fe-2S]-[ferredoxin]. In terms of biological role, apoprotein for the two 4Fe-4S centers FA and FB of photosystem I (PSI); essential for photochemical activity. FB is the terminal electron acceptor of PSI, donating electrons to ferredoxin. The C-terminus interacts with PsaA/B/D and helps assemble the protein into the PSI complex. Required for binding of PsaD and PsaE to PSI. PSI is a plastocyanin-ferredoxin oxidoreductase, converting photonic excitation into a charge separation, which transfers an electron from the donor P700 chlorophyll pair to the spectroscopically characterized acceptors A0, A1, FX, FA and FB in turn. The chain is Photosystem I iron-sulfur center from Chloranthus spicatus (Chulantree).